The sequence spans 576 residues: Septation ring formation regulator EzrA (576 aa).

Residues 1 to 7 lie on the Extracellular side of the membrane; the sequence is MSSTVII. The helical transmembrane segment at 8-26 threads the bilayer; it reads LIVVLLVILVAFYAFAILM. The Cytoplasmic segment spans residues 27–576; sequence RKKTEDRILA…FKNKPTPDYL (550 aa). Coiled-coil stretches lie at residues 105–134, 254–305, and 356–402; these read RARE…VAQL, ENVN…FERE, and GYQE…IEKN.

This sequence belongs to the EzrA family.

It is found in the cell membrane. In terms of biological role, negative regulator of FtsZ ring formation; modulates the frequency and position of FtsZ ring formation. Inhibits FtsZ ring formation at polar sites. Interacts either with FtsZ or with one of its binding partners to promote depolymerization. The sequence is that of Septation ring formation regulator EzrA from Lactococcus lactis subsp. cremoris (strain MG1363).